Consider the following 483-residue polypeptide: MKHYVAVDIGASSGRLILGKLVNEKLQLEEIHRFKNGFTYRDGHERWEIDQLMQEIFIGLEKVKQLGISECVLGIDTWGVDYVLIGASGEKLADPISYRDKRTLNAVQNLTSEYPREYIYKKTGIQFMELNTLYQLYVEERDLLERAEKILLIPDYIGYVLTGVKVAETTNSSTTQMLNLREQLFDKDLLSHLNIDVEKFAPLTDAGTYLGEVKEDWLKMYDIPNCDVVTVATHDTASAVVGTPAEGENWAFLSSGTWSLIGMELSAPINNEVAFKENYTNEWGAYGTYRFLKNIMGLWIVQEIARMDDYKHSFAEMAEEAGNYPYFKQIINVNDARFNNPENMVDEIRLYCRETGQTVPETIGELTNCVYGSLALYYALELEKMTEITGKKIEKLYIVGGGSNVAMLNQLTAKLAGIEVFAGPSEATAIGNLVVQMINQGEIESMRAGRKIIRNSFEIGEFSCGDVRFEEIKERFTKVLEFN.

Position 11-15 (11-15) interacts with ATP; that stretch reads ASSGR. Substrate contacts are provided by residues Gly79 and 234-236; that span reads HDT. Asp235 acts as the Proton acceptor in catalysis. Thr257 is an ATP binding site. Asn294 contacts substrate. Residue Gln302 coordinates ATP. Cys352 and Cys369 are oxidised to a cystine. Residue Gly401 coordinates ATP.

The protein belongs to the rhamnulokinase family. The cofactor is Mg(2+).

It carries out the reaction L-rhamnulose + ATP = L-rhamnulose 1-phosphate + ADP + H(+). The protein operates within carbohydrate degradation; L-rhamnose degradation; glycerone phosphate from L-rhamnose: step 2/3. Involved in the catabolism of L-rhamnose (6-deoxy-L-mannose). Catalyzes the transfer of the gamma-phosphate group from ATP to the 1-hydroxyl group of L-rhamnulose to yield L-rhamnulose 1-phosphate. This chain is Rhamnulokinase, found in Listeria monocytogenes serovar 1/2a (strain ATCC BAA-679 / EGD-e).